The primary structure comprises 335 residues: Holliday junction branch migration complex subunit RuvB (335 aa).

The large ATPase domain (RuvB-L) stretch occupies residues 4 to 184; it reads ADRIISSNAQ…FGIVQRLEFY (181 aa). ATP is bound by residues Ile23, Arg24, Gly65, Lys68, Thr69, Thr70, 131-133, Arg174, Tyr184, and Arg221; that span reads EDY. Thr69 contributes to the Mg(2+) binding site. Residues 185 to 255 are small ATPAse domain (RuvB-S); that stretch reads SVEDLTSIVA…IAKSALSMLD (71 aa). The tract at residues 258–335 is head domain (RuvB-H); the sequence is QAGFDYLDRK…RHFGLDKLTE (78 aa). Residues Arg294, Arg313, and Arg318 each coordinate DNA.

Belongs to the RuvB family. In terms of assembly, homohexamer. Forms an RuvA(8)-RuvB(12)-Holliday junction (HJ) complex. HJ DNA is sandwiched between 2 RuvA tetramers; dsDNA enters through RuvA and exits via RuvB. An RuvB hexamer assembles on each DNA strand where it exits the tetramer. Each RuvB hexamer is contacted by two RuvA subunits (via domain III) on 2 adjacent RuvB subunits; this complex drives branch migration. In the full resolvosome a probable DNA-RuvA(4)-RuvB(12)-RuvC(2) complex forms which resolves the HJ.

It is found in the cytoplasm. It catalyses the reaction ATP + H2O = ADP + phosphate + H(+). Functionally, the RuvA-RuvB-RuvC complex processes Holliday junction (HJ) DNA during genetic recombination and DNA repair, while the RuvA-RuvB complex plays an important role in the rescue of blocked DNA replication forks via replication fork reversal (RFR). RuvA specifically binds to HJ cruciform DNA, conferring on it an open structure. The RuvB hexamer acts as an ATP-dependent pump, pulling dsDNA into and through the RuvAB complex. RuvB forms 2 homohexamers on either side of HJ DNA bound by 1 or 2 RuvA tetramers; 4 subunits per hexamer contact DNA at a time. Coordinated motions by a converter formed by DNA-disengaged RuvB subunits stimulates ATP hydrolysis and nucleotide exchange. Immobilization of the converter enables RuvB to convert the ATP-contained energy into a lever motion, pulling 2 nucleotides of DNA out of the RuvA tetramer per ATP hydrolyzed, thus driving DNA branch migration. The RuvB motors rotate together with the DNA substrate, which together with the progressing nucleotide cycle form the mechanistic basis for DNA recombination by continuous HJ branch migration. Branch migration allows RuvC to scan DNA until it finds its consensus sequence, where it cleaves and resolves cruciform DNA. The sequence is that of Holliday junction branch migration complex subunit RuvB from Mannheimia succiniciproducens (strain KCTC 0769BP / MBEL55E).